We begin with the raw amino-acid sequence, 201 residues long: Small ribosomal subunit protein uS4c (201 aa).

The tract at residues 20 to 44 is disordered; that stretch reads GLTSKRPTVGSELRNQSRSTKKSQY. The region spanning 89-150 is the S4 RNA-binding domain; that stretch reads MRLDNILFRL…NKKSKTLIQN (62 aa).

The protein belongs to the universal ribosomal protein uS4 family. As to quaternary structure, part of the 30S ribosomal subunit. Contacts protein S5. The interaction surface between S4 and S5 is involved in control of translational fidelity.

The protein resides in the plastid. Its subcellular location is the chloroplast. Its function is as follows. One of the primary rRNA binding proteins, it binds directly to 16S rRNA where it nucleates assembly of the body of the 30S subunit. With S5 and S12 plays an important role in translational accuracy. In Lotus japonicus (Lotus corniculatus var. japonicus), this protein is Small ribosomal subunit protein uS4c (rps4).